A 363-amino-acid chain; its full sequence is Type-2 angiotensin II receptor (363 aa).

At 1-45 (MKDNFSFAATSRNITSSRPFDNLNATGTNESAFNCSHKPSDKHLE) the chain is on the extracellular side. N-linked (GlcNAc...) asparagine glycosylation is found at N4, N13, N24, N29, and N34. 2 disulfides stabilise this stretch: C35-C290 and C117-C195. A helical transmembrane segment spans residues 46-70 (AIPVLYYMIFVIGFAVNIVVVSLFC). The Cytoplasmic portion of the chain corresponds to 71 to 80 (CQKGPKKVSS). The helical transmembrane segment at 81-104 (IYIFNLALADLLLLATLPLWATYY) threads the bilayer. Residues Y103 and Y104 each coordinate angiotensin II. The Extracellular portion of the chain corresponds to 105–114 (SYRYDWLFGP). Residues 115 to 140 (VMCKVFGSFLTLNMFASIFFITCMSV) traverse the membrane as a helical segment. Residues 141–159 (DRYQSVIYPFLSQRRNPWQ) lie on the Cytoplasmic side of the membrane. A helical transmembrane segment spans residues 160-181 (ASYVVPLVWCMACLSSLPTFYF). Angiotensin II is bound by residues R182, Y204, and K215. The Extracellular segment spans residues 182-206 (RDVRTIEYLGVNACIMAFPPEKYAQ). The chain crosses the membrane as a helical span at residues 207-232 (WSAGIALMKNILGFIIPLIFIATCYF). Topologically, residues 233–257 (GIRKHLLKTNSYGKNRITRDQVLKM) are cytoplasmic. A helical transmembrane segment spans residues 258 to 281 (AAAVVLAFIICWLPFHVLTFLDAL). D279 contributes to the angiotensin II binding site. The Extracellular portion of the chain corresponds to 282-294 (TWMGIINSCEVIA). The helical transmembrane segment at 295 to 320 (VIDLALPFAILLGFTNSCVNPFLYCF) threads the bilayer. Residue D297 participates in angiotensin II binding. Topologically, residues 321–363 (VGNRFQQKLRSVFRVPITWLQGKRETMSCRKGSSLREMDTFVS) are cytoplasmic. The interval 324–333 (RFQQKLRSVF) is helix VIII. S354 carries the post-translational modification Phosphoserine; by PKC.

This sequence belongs to the G-protein coupled receptor 1 family. In terms of assembly, interacts with MTUS1. Expressed at highest levels in adrenal gland and uterus.

It is found in the cell membrane. In terms of biological role, receptor for angiotensin II, a vasoconstricting peptide. Signals primarily via a non-canonical G-protein- and beta-arrestin independent pathways. Cooperates with MTUS1 to inhibit ERK2 activation and cell proliferation. The protein is Type-2 angiotensin II receptor of Mus musculus (Mouse).